Consider the following 248-residue polypeptide: Probable transcriptional regulatory protein blr1534 (248 aa).

Positions 1–21 (MAGHSQFKNIMHRKGRQDAQK) are disordered.

Belongs to the TACO1 family.

It localises to the cytoplasm. The chain is Probable transcriptional regulatory protein blr1534 from Bradyrhizobium diazoefficiens (strain JCM 10833 / BCRC 13528 / IAM 13628 / NBRC 14792 / USDA 110).